The chain runs to 643 residues: Aspartic protease 3 (643 aa).

Residues 1 to 31 (MEGRTTAGRATPAGFWLFSCCLASVLWSANA) form the signal peptide. Residues 87–99 (APEVSGAAGASAS) show a composition bias toward low complexity. The disordered stretch occupies residues 87–116 (APEVSGAAGASASKTSEKPIRPYHTGPSSR). Residues 281 to 600 (YVGVIGIGTP…GTRPSLVGIA (320 aa)) form the Peptidase A1 domain. Active-site residues include aspartate 299 and aspartate 490.

The protein belongs to the peptidase A1 family.

Its subcellular location is the endomembrane system. Its activity is regulated as follows. Inhibited by 49c, a hydroxyethylamine scaffold-based compound. Functionally, required for the processing-mediated maturation of a subset of microneme proteins, such as MIC6, and rhoptry proteins, such as ROP1. By regulating microneme and rhoptry processing, plays an essential role in the lysis of the host cell membrane during egress and in rhoptry content discharge, which is required for invasion of host cells. This chain is Aspartic protease 3, found in Toxoplasma gondii.